The following is a 401-amino-acid chain: Argininosuccinate synthase (401 aa).

Residues 10–18 (AYSGGVDTS) and alanine 38 each bind ATP. An L-citrulline-binding site is contributed by tyrosine 89. Residue glycine 119 coordinates ATP. L-aspartate contacts are provided by threonine 121, asparagine 125, and aspartate 126. Residue asparagine 125 coordinates L-citrulline. 5 residues coordinate L-citrulline: arginine 129, serine 177, serine 186, glutamate 262, and tyrosine 274.

The protein belongs to the argininosuccinate synthase family. Type 1 subfamily. As to quaternary structure, homotetramer.

It is found in the cytoplasm. The enzyme catalyses L-citrulline + L-aspartate + ATP = 2-(N(omega)-L-arginino)succinate + AMP + diphosphate + H(+). The protein operates within amino-acid biosynthesis; L-arginine biosynthesis; L-arginine from L-ornithine and carbamoyl phosphate: step 2/3. The polypeptide is Argininosuccinate synthase (Microcystis aeruginosa (strain NIES-843 / IAM M-2473)).